Reading from the N-terminus, the 157-residue chain is Protein Smg homolog (157 aa).

The protein belongs to the Smg family.

This Photobacterium profundum (strain SS9) protein is Protein Smg homolog.